We begin with the raw amino-acid sequence, 287 residues long: Cysteine-rich repeat secretory protein 59 (287 aa).

An N-terminal signal peptide occupies residues 1–26 (METTKKLSPIFCFSSLLCLFFTMNQA). Gnk2-homologous domains follow at residues 32–134 (HMDT…DKFF) and 140–250 (KKPN…ITTS). N-linked (GlcNAc...) asparagine glycosylation is found at Asn-43, Asn-47, Asn-63, Asn-72, Asn-93, Asn-103, Asn-111, and Asn-212.

The protein belongs to the cysteine-rich repeat secretory protein family.

It localises to the secreted. The polypeptide is Cysteine-rich repeat secretory protein 59 (CRRSP59) (Arabidopsis thaliana (Mouse-ear cress)).